Reading from the N-terminus, the 853-residue chain is DNA mismatch repair protein MutS (853 aa).

An ATP-binding site is contributed by 614–621; sequence GPNMGGKS.

This sequence belongs to the DNA mismatch repair MutS family.

Its function is as follows. This protein is involved in the repair of mismatches in DNA. It is possible that it carries out the mismatch recognition step. This protein has a weak ATPase activity. This chain is DNA mismatch repair protein MutS, found in Escherichia coli O7:K1 (strain IAI39 / ExPEC).